An 857-amino-acid chain; its full sequence is RNA-directed RNA polymerase 2a (857 aa).

In terms of domain architecture, RdRp catalytic spans 511-624 (KHCLEIDLSK…FSVLPPVGDP (114 aa)). The disordered stretch occupies residues 772-857 (TKQRKKKDGI…PCEHGGIIRI (86 aa)). Positions 800–812 (EKTETKVSHEEST) are enriched in basic and acidic residues.

Belongs to the ssRNA positive-strand viruses RNA-directed RNA polymerase family. Interacts with replication protein 1a.

It carries out the reaction RNA(n) + a ribonucleoside 5'-triphosphate = RNA(n+1) + diphosphate. Functionally, RNA-dependent RNA polymerase which replicates the viral genome composed of 3 RNA segments, RNA1, RNA2 and RNA3. This chain is RNA-directed RNA polymerase 2a, found in Cucumis sativus (Cucumber).